We begin with the raw amino-acid sequence, 229 residues long: Putative N-acetylmannosamine-6-phosphate 2-epimerase (229 aa).

This sequence belongs to the NanE family.

The catalysed reaction is an N-acyl-D-glucosamine 6-phosphate = an N-acyl-D-mannosamine 6-phosphate. It participates in amino-sugar metabolism; N-acetylneuraminate degradation; D-fructose 6-phosphate from N-acetylneuraminate: step 3/5. In terms of biological role, converts N-acetylmannosamine-6-phosphate (ManNAc-6-P) to N-acetylglucosamine-6-phosphate (GlcNAc-6-P). The protein is Putative N-acetylmannosamine-6-phosphate 2-epimerase of Cutibacterium acnes (strain DSM 16379 / KPA171202) (Propionibacterium acnes).